We begin with the raw amino-acid sequence, 215 residues long: FGFR1 oncogene partner 2 homolog (215 aa).

The stretch at 12–186 forms a coiled coil; it reads AKELVERLRE…REILQITKIS (175 aa). Positions 193 to 215 are disordered; sequence EDASENSPHSAPVPNTDLILRKS.

This sequence belongs to the SIKE family.

It is found in the cytoplasm. The polypeptide is FGFR1 oncogene partner 2 homolog (fgfr1op2) (Xenopus laevis (African clawed frog)).